The chain runs to 1465 residues: DNA polymerase III PolC-type (1465 aa).

Residues 427-583 (YVVFDVETTG…YDAEATGRLL (157 aa)) enclose the Exonuclease domain.

It belongs to the DNA polymerase type-C family. PolC subfamily.

It localises to the cytoplasm. It catalyses the reaction DNA(n) + a 2'-deoxyribonucleoside 5'-triphosphate = DNA(n+1) + diphosphate. Its function is as follows. Required for replicative DNA synthesis. This DNA polymerase also exhibits 3' to 5' exonuclease activity. The chain is DNA polymerase III PolC-type from Streptococcus pyogenes serotype M5 (strain Manfredo).